A 364-amino-acid chain; its full sequence is B3 domain-containing protein At5g38490 (364 aa).

Residues 148–202 form a disordered region; that stretch reads ASTSSSSLLNLPCLEPSTETKDVPNPNYQSSSPSSCLTGKTNRKRRAVEQRKSGK. Positions 260 to 364 form a DNA-binding region, TF-B3; sequence FQKLIRNDFL…GVLCFALDTE (105 aa).

It localises to the nucleus. This Arabidopsis thaliana (Mouse-ear cress) protein is B3 domain-containing protein At5g38490.